Consider the following 200-residue polypeptide: ATP-dependent Clp protease proteolytic subunit 2 (200 aa).

S101 acts as the Nucleophile in catalysis. The active site involves H126.

This sequence belongs to the peptidase S14 family. As to quaternary structure, fourteen ClpP subunits assemble into 2 heptameric rings which stack back to back to give a disk-like structure with a central cavity, resembling the structure of eukaryotic proteasomes.

Its subcellular location is the cytoplasm. The enzyme catalyses Hydrolysis of proteins to small peptides in the presence of ATP and magnesium. alpha-casein is the usual test substrate. In the absence of ATP, only oligopeptides shorter than five residues are hydrolyzed (such as succinyl-Leu-Tyr-|-NHMec, and Leu-Tyr-Leu-|-Tyr-Trp, in which cleavage of the -Tyr-|-Leu- and -Tyr-|-Trp bonds also occurs).. Its function is as follows. Cleaves peptides in various proteins in a process that requires ATP hydrolysis. Has a chymotrypsin-like activity. Plays a major role in the degradation of misfolded proteins. This chain is ATP-dependent Clp protease proteolytic subunit 2, found in Prochlorococcus marinus (strain NATL2A).